The sequence spans 397 residues: Probable pyruvate dehydrogenase E1 component subunit alpha, mitochondrial (397 aa).

Pyruvate-binding residues include His-86, Tyr-112, Arg-113, Gly-159, Val-161, Asp-190, Gly-191, Ala-192, and Asn-219. Residues Tyr-112, Arg-113, Gly-159, Val-161, Asp-190, Gly-191, Ala-192, Asn-219, and His-286 each coordinate thiamine diphosphate. Asp-190 provides a ligand contact to Mg(2+). Asn-219 serves as a coordination point for Mg(2+).

In terms of assembly, tetramer of 2 alpha and 2 beta subunits. Requires thiamine diphosphate as cofactor. Mg(2+) is required as a cofactor.

It is found in the mitochondrion matrix. The enzyme catalyses N(6)-[(R)-lipoyl]-L-lysyl-[protein] + pyruvate + H(+) = N(6)-[(R)-S(8)-acetyldihydrolipoyl]-L-lysyl-[protein] + CO2. Its activity is regulated as follows. E1 activity is regulated by phosphorylation (inactivation) and dephosphorylation (activation) of the alpha subunit. Its function is as follows. The pyruvate dehydrogenase complex catalyzes the overall conversion of pyruvate to acetyl-CoA and CO(2). It contains multiple copies of three enzymatic components: pyruvate dehydrogenase (E1), dihydrolipoamide acetyltransferase (E2) and lipoamide dehydrogenase (E3). The sequence is that of Probable pyruvate dehydrogenase E1 component subunit alpha, mitochondrial from Caenorhabditis elegans.